A 195-amino-acid polypeptide reads, in one-letter code: Dihydroneopterin triphosphate diphosphatase (195 aa).

Asp73 (proton acceptor) is an active-site residue.

This sequence belongs to the HAM1 NTPase family. The cofactor is Mn(2+).

It catalyses the reaction 7,8-dihydroneopterin 3'-triphosphate + H2O = 7,8-dihydroneopterin 3'-phosphate + diphosphate + H(+). The protein operates within cofactor biosynthesis; tetrahydrofolate biosynthesis. Functionally, pyrophosphatase involved in the biosynthesis of tetrahydrofolate. Catalyzes the hydrolysis of dihydroneopterin triphosphate (DHNTP) to dihydroneopterin monophosphate (DHNMP) and pyrophosphate. Shows a strict substrate specificity. Has only weak activity with GTP, ITP, XTP and dTTP, and cannot use ATP, UTP, CTP, NAD(+), NADH, diadenosine triphosphate, diadenosine tetraphosphate, ADP-ribose and UDP-glucose. This is Dihydroneopterin triphosphate diphosphatase from Limosilactobacillus reuteri (strain DSM 20016) (Lactobacillus reuteri).